The primary structure comprises 345 residues: Methylthioribose-1-phosphate isomerase (345 aa).

Substrate-binding positions include 47 to 49, R90, and Q199; that span reads RGA. D240 serves as the catalytic Proton donor. 250-251 provides a ligand contact to substrate; the sequence is NK.

This sequence belongs to the eIF-2B alpha/beta/delta subunits family. MtnA subfamily.

The enzyme catalyses 5-(methylsulfanyl)-alpha-D-ribose 1-phosphate = 5-(methylsulfanyl)-D-ribulose 1-phosphate. Its pathway is amino-acid biosynthesis; L-methionine biosynthesis via salvage pathway; L-methionine from S-methyl-5-thio-alpha-D-ribose 1-phosphate: step 1/6. Its function is as follows. Catalyzes the interconversion of methylthioribose-1-phosphate (MTR-1-P) into methylthioribulose-1-phosphate (MTRu-1-P). This chain is Methylthioribose-1-phosphate isomerase, found in Crocosphaera subtropica (strain ATCC 51142 / BH68) (Cyanothece sp. (strain ATCC 51142)).